Here is a 446-residue protein sequence, read N- to C-terminus: Divalent metal cation transporter MntH (446 aa).

A run of 11 helical transmembrane segments spans residues 32-52 (LAFLGPGLLVAVGYMDPGNWI), 59-79 (AQFGYTLLFVILISSLSAMLL), 107-127 (AIIFWVIAELAIIATDIAEVI), 139-159 (IPLIIGALITVFDVFLLLFIM), 168-188 (AIVGTLIFTVLMIFVFEVYIS), 205-225 (IIANHSILYIALGIIGATIMP), 264-284 (SIAFIVNCLLLVLGAALFYGV), 303-323 (PVLGVVMGSIMSTLFAIALLA), 355-375 (LVTRSLAVIPVLLCLVIFRGN), 381-401 (QLLVFSQVFLSIALPFSLIPL), and 420-440 (VNICAWGLIIILSFLNIYLII).

This sequence belongs to the NRAMP family.

The protein localises to the cell membrane. Its function is as follows. H(+)-stimulated, divalent metal cation uptake system. This chain is Divalent metal cation transporter MntH, found in Staphylococcus haemolyticus (strain JCSC1435).